A 271-amino-acid polypeptide reads, in one-letter code: Beta-lactamase (271 aa).

Ser-46 acts as the Acyl-ester intermediate in catalysis. 210-212 serves as a coordination point for substrate; that stretch reads KTG.

Belongs to the class-A beta-lactamase family. In terms of assembly, monomer.

The enzyme catalyses a beta-lactam + H2O = a substituted beta-amino acid. Hydrolyzes broad-spectrum beta-lactam antibiotics. Active against cephalosporins. The protein is Beta-lactamase of Proteus vulgaris.